Here is a 157-residue protein sequence, read N- to C-terminus: MSAPFEERSGVVPCATPWGQWYQTLEEVFIEVQVPPGTRAQDIQCGLQSRHVALAVGGREILKGKLFDSTIADEGTWTLEDRKMVRIVLTKTKRDAANCWTSLLESEYAADPWVQDQMQRKLTLERFQKENPGFDFSGAEISGNYTKGGPDFSNLEK.

An N-acetylserine modification is found at Ser2. In terms of domain architecture, CS spans 14 to 104 (CATPWGQWYQ…DAANCWTSLL (91 aa)). Positions 134-157 (FDFSGAEISGNYTKGGPDFSNLEK) are disordered. Ser142 is modified (phosphoserine). Tyr145 bears the Phosphotyrosine mark.

In terms of assembly, interacts with LIS1.

It is found in the chromosome. It localises to the centromere. The protein localises to the kinetochore. The protein resides in the cytoplasm. Its subcellular location is the cytoskeleton. It is found in the microtubule organizing center. It localises to the centrosome. The protein localises to the spindle pole. Functionally, may regulate the LIS1/dynein pathway by stabilizing LIS1 with Hsp90 chaperone. This Rattus norvegicus (Rat) protein is NudC domain-containing protein 2 (Nudcd2).